A 546-amino-acid chain; its full sequence is uncharacterized protein (546 aa).

Helical transmembrane passes span 106-126 (WWIV…SSVY), 145-165 (TLGS…FAPL), 172-192 (FIIY…GGCA), 231-251 (YVLP…PIIG), 263-283 (WTFW…FIFF), 332-352 (LIFT…VYII), 375-395 (GLSF…TPFI), 416-436 (LYPL…FAWT), 444-464 (WIVP…VFFV), and 510-530 (WATS…FIFY).

The protein belongs to the major facilitator superfamily. CAR1 family.

The protein localises to the endoplasmic reticulum membrane. This is an uncharacterized protein from Schizosaccharomyces pombe (strain 972 / ATCC 24843) (Fission yeast).